The sequence spans 283 residues: Nucleotide-binding protein DR_1434 (283 aa).

Residue 8 to 15 (GLSGSGKS) coordinates ATP. Residue 57–60 (DTRT) participates in GTP binding.

The protein belongs to the RapZ-like family.

Functionally, displays ATPase and GTPase activities. This chain is Nucleotide-binding protein DR_1434, found in Deinococcus radiodurans (strain ATCC 13939 / DSM 20539 / JCM 16871 / CCUG 27074 / LMG 4051 / NBRC 15346 / NCIMB 9279 / VKM B-1422 / R1).